The following is a 71-amino-acid chain: UPF0434 protein Csal_1588 (71 aa).

It belongs to the UPF0434 family.

This is UPF0434 protein Csal_1588 from Chromohalobacter salexigens (strain ATCC BAA-138 / DSM 3043 / CIP 106854 / NCIMB 13768 / 1H11).